A 904-amino-acid chain; its full sequence is Serine/arginine repetitive matrix protein 1 (904 aa).

Methionine 1 is modified (N-acetylmethionine). Residues 1 to 151 (MDAGFFRGTS…ASMKKQDEDK (151 aa)) are necessary for DNA and RNA-binding. A necessary for mRNA 3'-end cleavage and cytoplasmic accumulation region spans residues 1 to 156 (MDAGFFRGTS…QDEDKDKRDK (156 aa)). The residue at position 7 (arginine 7) is a Citrulline. Residues 27–126 (QLKFAECLEK…AGIPSAFLEL (100 aa)) form the PWI domain. Residue lysine 127 forms a Glycyl lysine isopeptide (Lys-Gly) (interchain with G-Cter in SUMO2) linkage. Residues 139–170 (EKLASMKKQDEDKDKRDKEEKESSREKRERSR) show a composition bias toward basic and acidic residues. Residues 139-904 (EKLASMKKQD…MRKAQVSPQS (766 aa)) form a disordered region. Lysine 140 bears the N6-acetyllysine mark. The segment covering 171-207 (SPRRRKSRSPSPRRRSSPVRRERKRSHSRSPRHRTKS) has biased composition (basic residues). Residues 214 to 234 (PEKKEKTPELPEPSVKVKEPS) are compositionally biased toward basic and acidic residues. Threonine 220 carries the post-translational modification Phosphothreonine. Serine 227 carries the post-translational modification Phosphoserine. A Glycyl lysine isopeptide (Lys-Gly) (interchain with G-Cter in SUMO1); alternate cross-link involves residue lysine 231. Lysine 231 is covalently cross-linked (Glycyl lysine isopeptide (Lys-Gly) (interchain with G-Cter in SUMO2); alternate). Serine 234 and serine 240 each carry phosphoserine. Threonine 241 carries the post-translational modification Phosphothreonine. Residues 246–275 (KVPKPEPIPEPKEPSPEKNSKKEKEKEKTR) are compositionally biased toward basic and acidic residues. Lysine 249 participates in a covalent cross-link: Glycyl lysine isopeptide (Lys-Gly) (interchain with G-Cter in SUMO2). Residue serine 260 is modified to Phosphoserine. Composition is skewed to basic residues over residues 276 to 329 (PRSR…RTPP) and 336 to 351 (PRHRRSRSPVRRRRRS). Residues 300 to 688 (RRHRSRSRSY…NKRHSPSPRP (389 aa)) form a necessary for speckles and matrix localization region. Positions 352–368 (SASLSGSSSSSSSSRSR) are enriched in low complexity. Serine 389, serine 391, serine 393, and serine 402 each carry phosphoserine. Phosphothreonine is present on threonine 406. The residue at position 414 (serine 414) is a Phosphoserine. Threonine 416 carries the post-translational modification Phosphothreonine. A phosphoserine mark is found at serine 420, serine 429, serine 431, and serine 436. Over residues 428-438 (VSVSPGRTSGK) the composition is skewed to polar residues. Lysine 447 is covalently cross-linked (Glycyl lysine isopeptide (Lys-Gly) (interchain with G-Cter in SUMO2)). Residues serine 450 and serine 452 each carry the phosphoserine modification. A Glycyl lysine isopeptide (Lys-Gly) (interchain with G-Cter in SUMO2) cross-link involves residue lysine 459. Phosphoserine is present on residues serine 463 and serine 465. Residue lysine 472 forms a Glycyl lysine isopeptide (Lys-Gly) (interchain with G-Cter in SUMO2) linkage. Position 478 is a phosphoserine (serine 478). Low complexity predominate over residues 478–501 (SVQQRRQYRRQNQQSSSDSGSSSS). The segment covering 503 to 518 (EDERPKRSHVKNGEVG) has biased composition (basic and acidic residues). Serine 524, serine 526, serine 528, serine 530, serine 532, serine 549, and serine 551 each carry phosphoserine. Basic residues predominate over residues 533-560 (PRKRQKETSPRGRRRRSPSPPPTRRRRS). Threonine 555 carries the post-translational modification Phosphothreonine. Phosphoserine is present on residues serine 560 and serine 562. A compositionally biased stretch (basic residues) spans 567-592 (PRRRRTPTPPPRRRTPSPPPRRRSPS). A phosphothreonine mark is found at threonine 572, threonine 574, and threonine 581. Serine 583 is modified (phosphoserine). Residues 593 to 605 (PRRYSPPIQRRYS) show a composition bias toward low complexity. Residue tyrosine 596 is modified to Phosphotyrosine. Residues serine 597, serine 605, and serine 607 each carry the phosphoserine modification. Threonine 614 carries the phosphothreonine modification. Phosphoserine occurs at positions 616, 626, 628, 636, and 638. Basic residues predominate over residues 621-636 (PKRRASPSPPPKRRVS). Over residues 649–663 (TKRRSPSLSSKHRKG) the composition is skewed to basic residues. A phosphoserine mark is found at serine 694, serine 695, serine 696, serine 705, serine 707, serine 713, and serine 715. Composition is skewed to low complexity over residues 701-719 (RRGASSSPQRRQSPSPSTR) and 736-759 (AASPSPQSVRRVSSSRSVSGSPEP). Residue threonine 718 is modified to Phosphothreonine. Phosphoserine occurs at positions 738, 740, 748, 752, 754, 756, 769, 773, 775, and 777. A compositionally biased stretch (low complexity) spans 771 to 786 (VQSQSPSTNWSPAVPV). Threonine 778 is modified (phosphothreonine). 2 positions are modified to phosphoserine: serine 781 and serine 791. Threonine 793 is subject to Phosphothreonine. A phosphoserine mark is found at serine 795, serine 797, and serine 802. A compositionally biased stretch (basic residues) spans 809–834 (KKKKKKKDKKHKKDKKHKKHKKHKKE). A compositionally biased stretch (low complexity) spans 837-866 (VAAAAAAAVTPAAIAAATTTLAQEEPVAAP). Lysine 869 participates in a covalent cross-link: Glycyl lysine isopeptide (Lys-Gly) (interchain with G-Cter in SUMO2). Threonine 872 is subject to Phosphothreonine. A Phosphoserine modification is found at serine 874. Positions 882–892 (DLEKHLREKAL) are enriched in basic and acidic residues. Phosphoserine is present on serine 901.

The protein belongs to the splicing factor SR family. Identified in the spliceosome C complex. Found in a pre-mRNA splicing complex with SFRS4, SFRS5, SNRP70, SNRPA1, SRRM1 and SRRM2. Found in a pre-mRNA exonic splicing enhancer (ESE) complex with SNRP70, SNRPA1, SRRM1 and TRA2B/SFRS10. Component of the minor spliceosome, which splices U12-type introns. Found in a mRNA splicing-dependent exon junction complex (EJC) with DEK, PRPF8, NCBP1, RBM8A, RNPS1, SRRM1 and ALYREF/THOC4. Interacts with DDX39B, CPSF1, RBM8A, RNPS1, and ALYREF/THOC4. Seems to be a compound of RNA export complexes that are released from speckles in a ATP-dependent manner. In terms of processing, phosphorylated on multiple serine and threonine residues by DYRK3 during the G2-to-M transition, after the nuclear-envelope breakdown. Phosphorylation by DYRK3 promotes disassembly of nuclear speckles. Citrullinated by PADI4.

It localises to the nucleus matrix. The protein localises to the nucleus speckle. Its function is as follows. Part of pre- and post-splicing multiprotein mRNP complexes. As a component of the minor spliceosome, involved in the splicing of U12-type introns in pre-mRNAs. Involved in numerous pre-mRNA processing events. Promotes constitutive and exonic splicing enhancer (ESE)-dependent splicing activation by bridging together sequence-specific (SR family proteins, SFRS4, SFRS5 and TRA2B/SFRS10) and basal snRNP (SNRP70 and SNRPA1) factors of the spliceosome. Stimulates mRNA 3'-end cleavage independently of the formation of an exon junction complex. Binds both pre-mRNA and spliced mRNA 20-25 nt upstream of exon-exon junctions. Binds RNA and DNA with low sequence specificity and has similar preference for either double- or single-stranded nucleic acid substrates. This Homo sapiens (Human) protein is Serine/arginine repetitive matrix protein 1 (SRRM1).